Reading from the N-terminus, the 361-residue chain is Chorismate synthase (361 aa).

Arg48 provides a ligand contact to NADP(+). FMN is bound by residues 125–127 (RSS), 238–239 (NA), Gly278, 293–297 (KPTSS), and Arg319.

This sequence belongs to the chorismate synthase family. As to quaternary structure, homotetramer. FMNH2 serves as cofactor.

The enzyme catalyses 5-O-(1-carboxyvinyl)-3-phosphoshikimate = chorismate + phosphate. It participates in metabolic intermediate biosynthesis; chorismate biosynthesis; chorismate from D-erythrose 4-phosphate and phosphoenolpyruvate: step 7/7. Its function is as follows. Catalyzes the anti-1,4-elimination of the C-3 phosphate and the C-6 proR hydrogen from 5-enolpyruvylshikimate-3-phosphate (EPSP) to yield chorismate, which is the branch point compound that serves as the starting substrate for the three terminal pathways of aromatic amino acid biosynthesis. This reaction introduces a second double bond into the aromatic ring system. This Aliivibrio fischeri (strain ATCC 700601 / ES114) (Vibrio fischeri) protein is Chorismate synthase.